The following is a 374-amino-acid chain: Peptide chain release factor 2 (374 aa).

An N5-methylglutamine modification is found at Q250.

The protein belongs to the prokaryotic/mitochondrial release factor family. In terms of processing, methylated by PrmC. Methylation increases the termination efficiency of RF2.

It is found in the cytoplasm. Peptide chain release factor 2 directs the termination of translation in response to the peptide chain termination codons UGA and UAA. The sequence is that of Peptide chain release factor 2 from Beutenbergia cavernae (strain ATCC BAA-8 / DSM 12333 / CCUG 43141 / JCM 11478 / NBRC 16432 / NCIMB 13614 / HKI 0122).